Here is a 159-residue protein sequence, read N- to C-terminus: Nutritionally-regulated adipose and cardiac-enriched protein homolog (159 aa).

The segment at 1–67 (MKTAVHALSP…GDEPRRTTRH (67 aa)) is disordered. Basic and acidic residues-rich tracts occupy residues 12 to 25 (SRPE…KNEE) and 50 to 63 (SPQE…EPRR). The helical transmembrane segment at 107-124 (LTACILLALALGMCCGQA) threads the bilayer.

Its subcellular location is the cell membrane. The polypeptide is Nutritionally-regulated adipose and cardiac-enriched protein homolog (NRAC) (Bos taurus (Bovine)).